A 168-amino-acid chain; its full sequence is Phosphopantetheine adenylyltransferase (168 aa).

Position 8 (S8) interacts with substrate. ATP-binding positions include 8-9 (SF) and H16. Residues K40, T72, and R86 each coordinate substrate. ATP contacts are provided by residues 87 to 89 (GLR), E97, and 122 to 128 (YSFLSSS).

It belongs to the bacterial CoaD family. As to quaternary structure, homohexamer. It depends on Mg(2+) as a cofactor.

It localises to the cytoplasm. It catalyses the reaction (R)-4'-phosphopantetheine + ATP + H(+) = 3'-dephospho-CoA + diphosphate. It functions in the pathway cofactor biosynthesis; coenzyme A biosynthesis; CoA from (R)-pantothenate: step 4/5. Its function is as follows. Reversibly transfers an adenylyl group from ATP to 4'-phosphopantetheine, yielding dephospho-CoA (dPCoA) and pyrophosphate. The chain is Phosphopantetheine adenylyltransferase from Thermosynechococcus vestitus (strain NIES-2133 / IAM M-273 / BP-1).